We begin with the raw amino-acid sequence, 583 residues long: COP9 signalosome complex subunit 10 (583 aa).

A compositionally biased stretch (acidic residues) spans M1 to L35. The segment at M1 to D55 is disordered. The region spanning D297–F485 is the PCI domain.

As to quaternary structure, component of a COP9 signalosome-like (CSN) complex.

It localises to the cytoplasm. Its subcellular location is the nucleus. Functionally, component of the COP9 signalosome (CSN) complex that acts as an regulator of the ubiquitin (Ubl) conjugation pathway by mediating the deneddylation of the cullin subunit of SCF-type E3 ubiquitin-protein ligase complexes. The CSN complex is involved in the regulation of the mating pheromone response. The chain is COP9 signalosome complex subunit 10 (RRI2) from Kluyveromyces lactis (strain ATCC 8585 / CBS 2359 / DSM 70799 / NBRC 1267 / NRRL Y-1140 / WM37) (Yeast).